Consider the following 1066-residue polypeptide: Isoleucine--tRNA ligase (1066 aa).

The 'HIGH' region signature appears at Pro-47–Thr-57. The short motif at Lys-594 to Ser-598 is the 'KMSKS' region element. Lys-597 provides a ligand contact to ATP.

This sequence belongs to the class-I aminoacyl-tRNA synthetase family. IleS type 2 subfamily. In terms of assembly, monomer. Requires Zn(2+) as cofactor.

It localises to the cytoplasm. It catalyses the reaction tRNA(Ile) + L-isoleucine + ATP = L-isoleucyl-tRNA(Ile) + AMP + diphosphate. Catalyzes the attachment of isoleucine to tRNA(Ile). As IleRS can inadvertently accommodate and process structurally similar amino acids such as valine, to avoid such errors it has two additional distinct tRNA(Ile)-dependent editing activities. One activity is designated as 'pretransfer' editing and involves the hydrolysis of activated Val-AMP. The other activity is designated 'posttransfer' editing and involves deacylation of mischarged Val-tRNA(Ile). The sequence is that of Isoleucine--tRNA ligase from Methanocorpusculum labreanum (strain ATCC 43576 / DSM 4855 / Z).